We begin with the raw amino-acid sequence, 274 residues long: 3-methyl-2-oxobutanoate hydroxymethyltransferase (274 aa).

Mg(2+)-binding residues include Asp-49 and Asp-88. 3-methyl-2-oxobutanoate is bound by residues 49–50, Asp-88, and Lys-118; that span reads DS. Glu-120 is a binding site for Mg(2+). Residue Glu-187 is the Proton acceptor of the active site.

This sequence belongs to the PanB family. In terms of assembly, homodecamer; pentamer of dimers. Mg(2+) is required as a cofactor.

The protein resides in the cytoplasm. It carries out the reaction 3-methyl-2-oxobutanoate + (6R)-5,10-methylene-5,6,7,8-tetrahydrofolate + H2O = 2-dehydropantoate + (6S)-5,6,7,8-tetrahydrofolate. Its pathway is cofactor biosynthesis; (R)-pantothenate biosynthesis; (R)-pantoate from 3-methyl-2-oxobutanoate: step 1/2. Functionally, catalyzes the reversible reaction in which hydroxymethyl group from 5,10-methylenetetrahydrofolate is transferred onto alpha-ketoisovalerate to form ketopantoate. The polypeptide is 3-methyl-2-oxobutanoate hydroxymethyltransferase (Rhodopseudomonas palustris (strain TIE-1)).